Consider the following 108-residue polypeptide: Glutaredoxin-1 (108 aa).

A Glutaredoxin domain is found at 3 to 106 (EEFVQQRLAN…DILSSIGVLR (104 aa)). Cysteines 23 and 26 form a disulfide.

The protein belongs to the glutaredoxin family.

It localises to the virion. Its function is as follows. Displays thioltransferase and dehydroascorbate reductase activities. This chain is Glutaredoxin-1 (OPG075), found in Vaccinia virus (strain Copenhagen) (VACV).